Consider the following 448-residue polypeptide: Exodeoxyribonuclease 7 large subunit (448 aa).

Belongs to the XseA family. In terms of assembly, heterooligomer composed of large and small subunits.

The protein localises to the cytoplasm. The catalysed reaction is Exonucleolytic cleavage in either 5'- to 3'- or 3'- to 5'-direction to yield nucleoside 5'-phosphates.. Functionally, bidirectionally degrades single-stranded DNA into large acid-insoluble oligonucleotides, which are then degraded further into small acid-soluble oligonucleotides. This Shewanella sp. (strain ANA-3) protein is Exodeoxyribonuclease 7 large subunit.